The chain runs to 283 residues: 4-diphosphocytidyl-2-C-methyl-D-erythritol kinase (283 aa).

Residue Lys-10 is part of the active site. ATP is bound at residue 99-109 (PMGGGLGGGSS). Residue Asp-141 is part of the active site.

This sequence belongs to the GHMP kinase family. IspE subfamily. Homodimer.

The catalysed reaction is 4-CDP-2-C-methyl-D-erythritol + ATP = 4-CDP-2-C-methyl-D-erythritol 2-phosphate + ADP + H(+). It functions in the pathway isoprenoid biosynthesis; isopentenyl diphosphate biosynthesis via DXP pathway; isopentenyl diphosphate from 1-deoxy-D-xylulose 5-phosphate: step 3/6. In terms of biological role, catalyzes the phosphorylation of the position 2 hydroxy group of 4-diphosphocytidyl-2C-methyl-D-erythritol. This chain is 4-diphosphocytidyl-2-C-methyl-D-erythritol kinase, found in Salmonella choleraesuis (strain SC-B67).